The chain runs to 257 residues: 3-dehydroquinate dehydratase (257 aa).

Residues Glu-50 to Arg-52 and Arg-86 contribute to the 3-dehydroquinate site. The active-site Proton donor/acceptor is the His-147. Residue Lys-174 is the Schiff-base intermediate with substrate of the active site. The 3-dehydroquinate site is built by Arg-216, Ser-235, and Gln-239.

Belongs to the type-I 3-dehydroquinase family. In terms of assembly, homodimer.

The enzyme catalyses 3-dehydroquinate = 3-dehydroshikimate + H2O. It participates in metabolic intermediate biosynthesis; chorismate biosynthesis; chorismate from D-erythrose 4-phosphate and phosphoenolpyruvate: step 3/7. Its function is as follows. Involved in the third step of the chorismate pathway, which leads to the biosynthesis of aromatic amino acids. Catalyzes the cis-dehydration of 3-dehydroquinate (DHQ) and introduces the first double bond of the aromatic ring to yield 3-dehydroshikimate. The chain is 3-dehydroquinate dehydratase from Geobacillus kaustophilus (strain HTA426).